The sequence spans 75 residues: Conotoxin Vn5.6 (75 aa).

The N-terminal stretch at 1 to 19 (MLCLPVFIILLLLASPAAP) is a signal peptide. A propeptide spanning residues 20-59 (NPLEKRIQSDLIRAALEDADMKTGEREILNIIDSISDVAK) is cleaved from the precursor. Glutamine 60 carries the post-translational modification Pyrrolidone carboxylic acid.

This sequence belongs to the conotoxin T superfamily. Contains 2 disulfide bonds that can be either 'C1-C3, C2-C4' or 'C1-C4, C2-C3', since these disulfide connectivities have been observed for conotoxins with cysteine framework V (for examples, see AC P0DQQ7 and AC P81755). As to expression, expressed by the venom duct.

The protein localises to the secreted. In Conus ventricosus (Mediterranean cone), this protein is Conotoxin Vn5.6.